A 1057-amino-acid polypeptide reads, in one-letter code: Histone deacetylase complex subunit SAP130 (1057 aa).

Positions 1 to 69 (MSSQQFPRLG…LPPREEKQEP (69 aa)) are disordered. Polar residues predominate over residues 14 to 28 (PGLSQPPSQIASSGS). Residues 41–54 (EAGRDADVGTREHV) are compositionally biased toward basic and acidic residues. Position 206 is an omega-N-methylarginine (arginine 206). A Phosphothreonine modification is found at threonine 329. Phosphoserine occurs at positions 416 and 439. Disordered stretches follow at residues 619–695 (TTVV…KSEV) and 718–740 (PTVA…IAAA). The span at 620–641 (TVVQTHSQSASTNTPAQGSSPR) shows a compositional bias: polar residues. Residue lysine 794 forms a Glycyl lysine isopeptide (Lys-Gly) (interchain with G-Cter in SUMO2) linkage. The tract at residues 827–873 (NLSMPPSDLPPGASPRKKPRKQQHVISTEEGDMMETNSTDDEKSAAK) is disordered. Residues 845–1057 (PRKQQHVIST…VSKLKRKEKV (213 aa)) form an interactions with SIN3A and HDAC1 region. The residue at position 864 (serine 864) is a Phosphoserine. Threonine 865 is subject to Phosphothreonine. Glycyl lysine isopeptide (Lys-Gly) (interchain with G-Cter in SUMO2) cross-links involve residues lysine 873 and lysine 878. Phosphoserine is present on serine 884.

It belongs to the SAP130 family. Component of a mSin3A corepressor complex that contains SIN3A, SAP130, SUDS3/SAP45, ARID4B/SAP180, HDAC1 and HDAC2. Interacts (released by dead or dying cells) with CLEC4E. Acetylated. Post-translationally, sumoylated with SUMO1.

The protein localises to the nucleus. Its function is as follows. Acts as a transcriptional repressor. May function in the assembly and/or enzymatic activity of the mSin3A corepressor complex or in mediating interactions between the complex and other regulatory complexes. The chain is Histone deacetylase complex subunit SAP130 (Sap130) from Mus musculus (Mouse).